A 1580-amino-acid chain; its full sequence is Collagen alpha-1(XVI) chain (1580 aa).

The first 21 residues, 1–21 (MLTSWAPGLWVLGLWATFSHG), serve as a signal peptide directing secretion. A glycan (N-linked (GlcNAc...) asparagine) is linked at Asn47. The Laminin G-like domain occupies 50-231 (GFNLIRRLNL…LQQAHIYCDP (182 aa)). The tract at residues 232–374 (ELVLEEGCCE…SPDAPLQCVE (143 aa)) is nonhelical region 10 (NC10). A disordered region spans residues 324-547 (RESNVTLGPS…DPAPAWEGLG (224 aa)). An N-linked (GlcNAc...) asparagine glycan is attached at Asn327. Positions 375–424 (GPKGEKGESGDLGPPGLPGPTGQKGQKGEKGDGGLKGLPGKPGRDGRPGE) constitute a Collagen-like 1 domain. The triple-helical region 9 (COL9) with 3 imperfections stretch occupies residues 375–509 (GPKGEKGESG…PGTKGEKGDP (135 aa)). The segment covering 449 to 460 (PGPPGLPGPPGI) has biased composition (pro residues). The segment covering 486–495 (GKEGPGGKPG) has biased composition (gly residues). Residues 510–524 (CEVCPTLPEGSQNFV) are nonhelical region 9 (NC9). Residues 525-570 (GLPGKPGPKGEPGDPAPAWEGLGTVGLKGDRGDPGIQGMKGEKGEP) are triple-helical region 8 (COL8) with 1 imperfection. The short motif at 555–557 (RGD) is the Cell attachment site element. The nonhelical region 8 (NC8) stretch occupies residues 571–586 (CSSCSSGVGAQHLGPS). Positions 585–598 (PSPGHGLPGLPGTS) are enriched in low complexity. Positions 585-935 (PSPGHGLPGL…LPGQPGLTAE (351 aa)) are disordered. Residues 587 to 640 (PGHGLPGLPGTSGIPGPRGLKGEKGSFGDTGPAGVPGSPGPVGPAGIKGAKGEP) form a triple-helical region 7 (COL7) with 1 imperfection region. Collagen-like domains are found at residues 590-643 (GLPG…PCEP) and 676-725 (GLPG…PAGP). Positions 641 to 661 (CEPCTALSELQDGDMRVVHLP) are nonhelical region 7 (NC7). Residues 662–732 (GPAGEKGEPG…AGPKGEKGDG (71 aa)) form a triple-helical region 6 (COL6) with 1 imperfection region. The span at 683–693 (KAGERGLKGQK) shows a compositional bias: basic and acidic residues. Over residues 698–714 (NPGDPGTPGITGQPGIS) the composition is skewed to low complexity. Residues 733 to 747 (CTACPSLQGALTDVS) form a nonhelical region 6 (NC6) region. The triple-helical region 5 (COL5) with 3 imperfections stretch occupies residues 748 to 870 (GLPGKPGPKG…RGEKGEPGEC (123 aa)). The region spanning 797–848 (GAEGPQGEPGTQGLPGTQGLPGPRGPPGSAGEKGAQGSPGPKGAIGPMGPPG) is the Collagen-like 4 domain. The segment covering 801–817 (PQGEPGTQGLPGTQGLP) has biased composition (low complexity). The nonhelical region 5 (NC5) stretch occupies residues 871–881 (SCPSRGEPIFS). The triple-helical region 4 (COL4) with 2 imperfections stretch occupies residues 882–933 (GMPGAPGLWMGSSSQPGPQGPPGVPGPPGPPGMPGLQGVPGHNGLPGQPGLT). Positions 899 to 914 (PQGPPGVPGPPGPPGM) are enriched in pro residues. A nonhelical region 4 (NC4) region spans residues 934–967 (AELGSLPIEKHLLKSICGDCAQGQTAHPAFLLEK). The tract at residues 968–982 (GEKGDQGIPGVPGFD) is triple-helical region 3 (COL3). The tract at residues 983–1005 (NCARCFIERERPRAEEARGDNSE) is nonhelical region 3 (NC3). Disordered regions lie at residues 995-1405 (RAEE…LPGS) and 1445-1523 (AAAP…GYGK). The Cell attachment site signature appears at 1000–1002 (RGD). A Collagen-like 5 domain is found at 1006-1063 (GEPGCSGSPGLPGPPGMPGQRGEEGPPGMRGSPGPPGPIGLQGERGLTGLTGDKGEPG). The segment at 1006–1409 (GEPGCSGSPG…PGLPGSMGDM (404 aa)) is triple-helical region 2 (COL2) with 2 imperfections. The span at 1098–1107 (SGPPGSEGLP) shows a compositional bias: low complexity. Pro residues-rich tracts occupy residues 1139 to 1148 (FPGPPGPPGF) and 1178 to 1187 (SPGPPGPPGI). Basic and acidic residues predominate over residues 1196–1205 (LDGKDGKPGL). The short motif at 1206-1208 (RGD) is the Cell attachment site element. A Collagen-like 6 domain is found at 1210-1263 (GPAGPPGLMGPPGFKGKTGHPGLPGPKGDCGKPGPPGSSGRPGAEGEPGAMGPQ). The segment covering 1247–1263 (SSGRPGAEGEPGAMGPQ) has biased composition (low complexity). The span at 1265–1281 (RPGPPGHLGPPGQPGPP) shows a compositional bias: pro residues. Collagen-like domains lie at 1350–1407 (GQKG…GSMG), 1448–1500 (PGRP…GDIG), and 1504–1552 (AGEN…GKAG). Residues 1362–1371 (GMPGGPGKSG) are compositionally biased toward gly residues. Residues 1396–1405 (NPGLPGLPGS) show a composition bias toward low complexity. A nonhelical region 2 (NC2) region spans residues 1410-1448 (VNYDDIKRFIRQEIIKLFDERMAYYTSRMQFPMEVAAAP). The segment at 1449-1554 (GRPGPPGKDG…MGQPGKAGHC (106 aa)) is triple-helical region 1 (COL1) with 2 imperfections. Residues 1555–1580 (NPSDCFGAMPMEQQYPPMKSMKGPFG) form a nonhelical region 1 (NC1) region.

This sequence belongs to the fibril-associated collagens with interrupted helices (FACIT) family. In terms of assembly, homotrimer. Interacts with FBN1, fibronectin and integrins ITGA1/ITGB1 and ITGA2/ITGB1. Integrin ITGA1/ITGB1 binds to a unique site within COL16A1 located close to its C-terminal end between collagenous domains COL1-COL3. Prolines at the third position of the tripeptide repeating unit (G-X-Y) are hydroxylated in some or all of the chains. In terms of processing, glycosylated. Expressed in most tissues examined with highest levels of expression observed in heart. Strongly expressed in cortical and medullar regions of kidney and more weakly expressed in lung. Also detected in the ciliary muscle of the eye, on the serosa layer lining the muscularis externa of intestinal tissue, and in the perimysium membrane lining both the cardiac muscle bundle and the smooth muscle tissue of the small intestine. Strongly stained in particulate or granular structures. Not detected in brain or skeletal muscle.

Its subcellular location is the secreted. It localises to the extracellular space. The protein resides in the extracellular matrix. In terms of biological role, involved in mediating cell attachment and inducing integrin-mediated cellular reactions, such as cell spreading and alterations in cell morphology. The sequence is that of Collagen alpha-1(XVI) chain from Mus musculus (Mouse).